Reading from the N-terminus, the 107-residue chain is SOSS complex subunit C (107 aa).

The protein belongs to the SOSS-C family. As to quaternary structure, belongs to the multiprotein complex Integrator. Component of the SOSS complex, composed of soss-b (soss-b1/nabp2 or soss-b2/nabp1), soss-a/ints3 and soss-c/inip.

The protein resides in the nucleus. Functionally, component of the SOSS complex, a multiprotein complex that functions downstream of the MRN complex to promote DNA repair and G2/M checkpoint. The SOSS complex associates with single-stranded DNA at DNA lesions and influences diverse endpoints in the cellular DNA damage response including cell-cycle checkpoint activation, recombinational repair and maintenance of genomic stability. Required for efficient homologous recombination-dependent repair of double-strand breaks (DSBs). This chain is SOSS complex subunit C (inip), found in Salmo salar (Atlantic salmon).